A 219-amino-acid polypeptide reads, in one-letter code: Probable GTP-binding protein EngB (219 aa).

The EngB-type G domain occupies 33–217 (GPLEIAFAGR…RAAICETVGH (185 aa)). Residues 41 to 48 (GRSNVGKS), 68 to 72 (GRTQE), 95 to 98 (DMPG), 162 to 165 (TKTD), and 196 to 198 (TSS) each bind GTP. Residues S48 and T70 each coordinate Mg(2+).

The protein belongs to the TRAFAC class TrmE-Era-EngA-EngB-Septin-like GTPase superfamily. EngB GTPase family. The cofactor is Mg(2+).

In terms of biological role, necessary for normal cell division and for the maintenance of normal septation. The protein is Probable GTP-binding protein EngB of Allorhizobium ampelinum (strain ATCC BAA-846 / DSM 112012 / S4) (Agrobacterium vitis (strain S4)).